Reading from the N-terminus, the 334-residue chain is Tetratricopeptide repeat protein 24 (334 aa).

TPR repeat units lie at residues 35–68 (GPFY…CRQP), 72–105 (ATVL…HGSV), 112–145 (GRSF…AQDT), and 152–185 (WQAC…CQHE). The interval 220-258 (PGKLQTSRKAKTSARVQSSAEDAQESQWEGEASEGGHEK) is disordered. Residues 233–246 (ARVQSSAEDAQESQ) are compositionally biased toward polar residues.

This chain is Tetratricopeptide repeat protein 24 (Ttc24), found in Mus musculus (Mouse).